A 118-amino-acid polypeptide reads, in one-letter code: Large ribosomal subunit protein bL20 (118 aa).

Belongs to the bacterial ribosomal protein bL20 family.

In terms of biological role, binds directly to 23S ribosomal RNA and is necessary for the in vitro assembly process of the 50S ribosomal subunit. It is not involved in the protein synthesizing functions of that subunit. In Lactobacillus johnsonii (strain CNCM I-12250 / La1 / NCC 533), this protein is Large ribosomal subunit protein bL20.